Consider the following 371-residue polypeptide: Choline kinase B1 (371 aa).

It belongs to the choline/ethanolamine kinase family. Mg(2+) serves as cofactor.

It catalyses the reaction choline + ATP = phosphocholine + ADP + H(+). The protein is Choline kinase B1 (ckb-1) of Caenorhabditis elegans.